The primary structure comprises 319 residues: Thioredoxin reductase (319 aa).

FAD is bound at residue 36 to 48; the sequence is EGFMAGGVAAGGQ. Cysteines 144 and 147 form a disulfide. 289 to 298 serves as a coordination point for FAD; it reads DVQDKVYRQA.

Belongs to the class-II pyridine nucleotide-disulfide oxidoreductase family. As to quaternary structure, homodimer. The cofactor is FAD.

It carries out the reaction [thioredoxin]-dithiol + NADP(+) = [thioredoxin]-disulfide + NADPH + H(+). This chain is Thioredoxin reductase (trrA), found in Dictyostelium discoideum (Social amoeba).